Consider the following 116-residue polypeptide: Ribonuclease P protein component (116 aa).

Belongs to the RnpA family. In terms of assembly, consists of a catalytic RNA component (M1 or rnpB) and a protein subunit.

The catalysed reaction is Endonucleolytic cleavage of RNA, removing 5'-extranucleotides from tRNA precursor.. In terms of biological role, RNaseP catalyzes the removal of the 5'-leader sequence from pre-tRNA to produce the mature 5'-terminus. It can also cleave other RNA substrates such as 4.5S RNA. The protein component plays an auxiliary but essential role in vivo by binding to the 5'-leader sequence and broadening the substrate specificity of the ribozyme. The sequence is that of Ribonuclease P protein component from Carboxydothermus hydrogenoformans (strain ATCC BAA-161 / DSM 6008 / Z-2901).